The primary structure comprises 129 residues: UPF0344 protein SSP1805 (129 aa).

4 consecutive transmembrane segments (helical) span residues 1–21, 36–56, 68–88, and 100–120; these read MLHM…AAYF, IHML…WVWI, MLLT…EVTI, and LMWT…ILPM.

This sequence belongs to the UPF0344 family.

The protein localises to the cell membrane. The protein is UPF0344 protein SSP1805 of Staphylococcus saprophyticus subsp. saprophyticus (strain ATCC 15305 / DSM 20229 / NCIMB 8711 / NCTC 7292 / S-41).